Reading from the N-terminus, the 130-residue chain is Small ribosomal subunit protein uS9 (130 aa).

Residues 109 to 130 (RMKERRKYGLKKARKAPQFSKR) are disordered. Basic residues predominate over residues 111-130 (KERRKYGLKKARKAPQFSKR).

It belongs to the universal ribosomal protein uS9 family.

The polypeptide is Small ribosomal subunit protein uS9 (Caldanaerobacter subterraneus subsp. tengcongensis (strain DSM 15242 / JCM 11007 / NBRC 100824 / MB4) (Thermoanaerobacter tengcongensis)).